An 81-amino-acid polypeptide reads, in one-letter code: Small ribosomal subunit protein bS16 (81 aa).

Belongs to the bacterial ribosomal protein bS16 family.

This Coprothermobacter proteolyticus (strain ATCC 35245 / DSM 5265 / OCM 4 / BT) protein is Small ribosomal subunit protein bS16.